The following is a 147-amino-acid chain: Cyanate hydratase (147 aa).

Active-site residues include arginine 88, glutamate 91, and serine 114.

The protein belongs to the cyanase family.

It carries out the reaction cyanate + hydrogencarbonate + 3 H(+) = NH4(+) + 2 CO2. Its function is as follows. Catalyzes the reaction of cyanate with bicarbonate to produce ammonia and carbon dioxide. This Parasynechococcus marenigrum (strain WH8102) protein is Cyanate hydratase.